The following is a 622-amino-acid chain: Carbon monoxide dehydrogenase (622 aa).

[4Fe-4S] cluster is bound by residues Cys40, Cys49, Cys52, Cys57, and Cys68. [Ni-4Fe-5S] cluster contacts are provided by His256, Cys334, Cys442, Cys473, and Cys514.

It belongs to the Ni-containing carbon monoxide dehydrogenase family. In terms of assembly, homodimer. [4Fe-4S] cluster serves as cofactor. The cofactor is [Ni-4Fe-5S] cluster.

The enzyme catalyses CO + 2 oxidized [2Fe-2S]-[ferredoxin] + H2O = 2 reduced [2Fe-2S]-[ferredoxin] + CO2 + 2 H(+). CODH oxidizes carbon monoxide coupled, via CooF, to the reduction of a hydrogen cation by a hydrogenase (possibly CooH). This is Carbon monoxide dehydrogenase (cooS) from Archaeoglobus fulgidus (strain ATCC 49558 / DSM 4304 / JCM 9628 / NBRC 100126 / VC-16).